The sequence spans 292 residues: 33 kDa chaperonin (292 aa).

2 disulfides stabilise this stretch: cysteine 230–cysteine 232 and cysteine 263–cysteine 266.

The protein belongs to the HSP33 family. Post-translationally, under oxidizing conditions two disulfide bonds are formed involving the reactive cysteines. Under reducing conditions zinc is bound to the reactive cysteines and the protein is inactive.

It localises to the cytoplasm. Redox regulated molecular chaperone. Protects both thermally unfolding and oxidatively damaged proteins from irreversible aggregation. Plays an important role in the bacterial defense system toward oxidative stress. The polypeptide is 33 kDa chaperonin (Escherichia coli O7:K1 (strain IAI39 / ExPEC)).